The primary structure comprises 47 residues: PhoP/PhoQ regulator MgrB (47 aa).

The helical transmembrane segment at 6-26 (WVALVVVVLACLLLWAQVFNM) threads the bilayer.

The protein belongs to the MgrB family. As to quaternary structure, may form homooligomers. Probably interacts with the periplasmic domain of PhoQ.

The protein localises to the cell inner membrane. Functionally, phoP-regulated transcription is redox-sensitive, being activated when the periplasm becomes more reducing. MgrB acts between DsbA/DsbB and PhoP/PhoQ in this pathway. Represses PhoP/PhoQ signaling, possibly by binding to the periplasmic domain of PhoQ, altering its activity and that of downstream effector PhoP. The sequence is that of PhoP/PhoQ regulator MgrB from Escherichia coli O127:H6 (strain E2348/69 / EPEC).